Consider the following 303-residue polypeptide: MSTSHVALPTKAERHKLFGSVPPIKGTKPTEKEQMVDLQNTPKNFLFALDSVGISNVKHPVNVETPEGVQSTVATFELTTSLVQDRKGINMSRLTEQLDAYHQQGWTVSNRSLIEFAQELAERMEQTEGQLTIRYPWFFTRKAPATGLSGLMNADVMHRVTYNLETGVANVTVGLVINVTTLCPCSKEISEYSAHNQRGYITIEAGLDETSMDGFDWRAALLDAAESNASAPLHPVLKRPDEKRATEIAYENPRFVEDMVRLIAADLYEMKQVVNFFVECRNEESIHQHDAIASITFDKRQDA.

The protein belongs to the GTP cyclohydrolase IV family.

The enzyme catalyses GTP + H2O = 7,8-dihydroneopterin 3'-triphosphate + formate + H(+). It participates in cofactor biosynthesis; 7,8-dihydroneopterin triphosphate biosynthesis; 7,8-dihydroneopterin triphosphate from GTP: step 1/1. In terms of biological role, converts GTP to 7,8-dihydroneopterin triphosphate. This is GTP cyclohydrolase FolE2 from Exiguobacterium sp. (strain ATCC BAA-1283 / AT1b).